A 1679-amino-acid polypeptide reads, in one-letter code: Maestro heat-like repeat-containing protein family member 2A (1679 aa).

HEAT repeat units follow at residues 68–91 (ATTD…ISTQ), 92–128 (RKMN…QMRD), 190–229 (MPYM…TVQF), 293–313 (EQVY…GHWP), 314–350 (LFPS…ELHV), 380–417 (SYPK…ADDP), 422–459 (KTIY…SGFQ), 571–610 (PAPQ…SIAP), 614–654 (DMWE…SLKK), 737–774 (KTVL…ETVK), 848–887 (SALT…MKPF), 991–1028 (GQFG…LHVS), 1219–1261 (DPLM…SHGP), 1387–1425 (KLLR…GAPR), and 1632–1669 (MDLV…CNQH).

In Mus musculus (Mouse), this protein is Maestro heat-like repeat-containing protein family member 2A (Mroh2a).